The chain runs to 134 residues: Putative pre-16S rRNA nuclease (134 aa).

The protein belongs to the YqgF nuclease family.

It localises to the cytoplasm. In terms of biological role, could be a nuclease involved in processing of the 5'-end of pre-16S rRNA. This Hydrogenovibrio crunogenus (strain DSM 25203 / XCL-2) (Thiomicrospira crunogena) protein is Putative pre-16S rRNA nuclease.